The chain runs to 384 residues: Chaperone protein DnaJ (384 aa).

In terms of domain architecture, J spans D5 to G70. Residues G138–E216 form a CR-type zinc finger. The Zn(2+) site is built by C151, C154, C168, C171, C190, C193, C204, and C207. 4 CXXCXGXG motif repeats span residues C151–G158, C168–G175, C190–G197, and C204–G211. Positions K300–R322 are disordered.

This sequence belongs to the DnaJ family. Homodimer. Zn(2+) is required as a cofactor.

The protein localises to the cytoplasm. Participates actively in the response to hyperosmotic and heat shock by preventing the aggregation of stress-denatured proteins and by disaggregating proteins, also in an autonomous, DnaK-independent fashion. Unfolded proteins bind initially to DnaJ; upon interaction with the DnaJ-bound protein, DnaK hydrolyzes its bound ATP, resulting in the formation of a stable complex. GrpE releases ADP from DnaK; ATP binding to DnaK triggers the release of the substrate protein, thus completing the reaction cycle. Several rounds of ATP-dependent interactions between DnaJ, DnaK and GrpE are required for fully efficient folding. Also involved, together with DnaK and GrpE, in the DNA replication of plasmids through activation of initiation proteins. The sequence is that of Chaperone protein DnaJ from Paracoccus denitrificans (strain Pd 1222).